The sequence spans 343 residues: Acetylglutamate kinase (343 aa).

Residues 98–99 (GG), R120, and N219 each bind substrate.

Belongs to the acetylglutamate kinase family. ArgB subfamily.

The protein resides in the cytoplasm. The catalysed reaction is N-acetyl-L-glutamate + ATP = N-acetyl-L-glutamyl 5-phosphate + ADP. It functions in the pathway amino-acid biosynthesis; L-arginine biosynthesis; N(2)-acetyl-L-ornithine from L-glutamate: step 2/4. Functionally, catalyzes the ATP-dependent phosphorylation of N-acetyl-L-glutamate. The chain is Acetylglutamate kinase from Frankia alni (strain DSM 45986 / CECT 9034 / ACN14a).